A 587-amino-acid chain; its full sequence is Proline-rich protein 14 (587 aa).

The residue at position 1 (Met-1) is an N-acetylmethionine. The span at 1 to 11 (MDLPGDSSTPG) shows a compositional bias: polar residues. 3 disordered regions span residues 1–48 (MDLP…EKAS), 65–152 (VPLE…HQPT), and 181–241 (ARRA…RPRL). Positions 1 to 135 (MDLPGDSSTP…TPRRQSRTTP (135 aa)) are sufficient for heterochromatin association in interphase and chromatin association in anaphase. Residues 85 to 378 (SVRSQPPASP…MAKAPPPPRP (294 aa)) are required for the interaction with GRB2 and sufficient to promote the phosphorylation of AKT and cell proliferation. A required for nuclear lamina association region spans residues 136-365 (GPDEGPSQKV…RPRPRRHTVG (230 aa)). Over residues 200–214 (LPAPSRPSALSANPL) the composition is skewed to low complexity. Over residues 215–234 (ASPPPAPDPVLEPPSTPPPS) the composition is skewed to pro residues. Ser-277 carries the phosphoserine modification. Disordered stretches follow at residues 290–444 (EAGQ…IGKV) and 524–587 (FRDS…PHRT). Positions 314–325 (AQDQNPSATLTK) are enriched in polar residues. The span at 337 to 356 (LGPPGPDPCSWPPVPAPSSR) shows a compositional bias: pro residues. A compositionally biased stretch (low complexity) spans 398-410 (TSCSSTASTSSFS). A required for nuclear localization region spans residues 519–536 (RRTVEFRDSSLPRSRRPS). A compositionally biased stretch (low complexity) spans 538–548 (GARATAGRTLP). Acidic residues predominate over residues 572 to 581 (LLEEEEEGDQ).

As to quaternary structure, interacts (via proline-rich region) with GRB2 (via SH3 domain 2). Interacts (via N-terminus) with CBX5.

It localises to the chromosome. The protein localises to the nucleus. The protein resides in the nucleus lamina. It is found in the nucleoplasm. In terms of biological role, functions in tethering peripheral heterochromatin to the nuclear lamina during interphase, possibly through the interaction with heterochromatin protein CBX5/HP1 alpha. Might play a role in reattaching heterochromatin to the nuclear lamina at mitotic exit. Promotes myoblast differentiation during skeletal myogenesis, possibly by stimulating transcription factor MyoD activity via binding to CBX5/HP1 alpha. Involved in the positive regulation of the PI3K-Akt-mTOR signaling pathway and in promoting cell proliferation, possibly via binding to GRB2. This is Proline-rich protein 14 (PRR14) from Bos taurus (Bovine).